Consider the following 1430-residue polypeptide: DNA-directed RNA polymerase subunit beta' (1430 aa).

The Zn(2+) site is built by Cys-70, Cys-72, Cys-85, and Cys-88. Residues Asp-495, Asp-497, and Asp-499 each coordinate Mg(2+). Positions 838, 912, 919, and 922 each coordinate Zn(2+).

This sequence belongs to the RNA polymerase beta' chain family. As to quaternary structure, the RNAP catalytic core consists of 2 alpha, 1 beta, 1 beta' and 1 omega subunit. When a sigma factor is associated with the core the holoenzyme is formed, which can initiate transcription. Mg(2+) serves as cofactor. Requires Zn(2+) as cofactor.

It catalyses the reaction RNA(n) + a ribonucleoside 5'-triphosphate = RNA(n+1) + diphosphate. DNA-dependent RNA polymerase catalyzes the transcription of DNA into RNA using the four ribonucleoside triphosphates as substrates. In Rhodospirillum centenum (strain ATCC 51521 / SW), this protein is DNA-directed RNA polymerase subunit beta'.